Reading from the N-terminus, the 362-residue chain is Histidinol-phosphate aminotransferase 1 (362 aa).

Residue K226 is modified to N6-(pyridoxal phosphate)lysine.

This sequence belongs to the class-II pyridoxal-phosphate-dependent aminotransferase family. Histidinol-phosphate aminotransferase subfamily. Homodimer. The cofactor is pyridoxal 5'-phosphate.

It carries out the reaction L-histidinol phosphate + 2-oxoglutarate = 3-(imidazol-4-yl)-2-oxopropyl phosphate + L-glutamate. It functions in the pathway amino-acid biosynthesis; L-histidine biosynthesis; L-histidine from 5-phospho-alpha-D-ribose 1-diphosphate: step 7/9. The protein is Histidinol-phosphate aminotransferase 1 of Dechloromonas aromatica (strain RCB).